The following is a 691-amino-acid chain: Threonine--tRNA ligase (691 aa).

Residues 1–22 form a disordered region; the sequence is MSVPAQPAPGADGGDPRQPIRV. Residues 1–73 enclose the TGS domain; it reads MSVPAQPAPG…DADAEVTPIA (73 aa). The tract at residues 268-574 is catalytic; it reads DHRKLGVELD…LTEHYAGAFP (307 aa). The Zn(2+) site is built by Cys-373, His-424, and His-551.

It belongs to the class-II aminoacyl-tRNA synthetase family. As to quaternary structure, homodimer. Zn(2+) serves as cofactor.

It localises to the cytoplasm. The catalysed reaction is tRNA(Thr) + L-threonine + ATP = L-threonyl-tRNA(Thr) + AMP + diphosphate + H(+). In terms of biological role, catalyzes the attachment of threonine to tRNA(Thr) in a two-step reaction: L-threonine is first activated by ATP to form Thr-AMP and then transferred to the acceptor end of tRNA(Thr). Also edits incorrectly charged L-seryl-tRNA(Thr). The chain is Threonine--tRNA ligase from Mycobacterium ulcerans (strain Agy99).